A 472-amino-acid polypeptide reads, in one-letter code: Type I restriction enzyme BthVORF4518P methylase subunit (472 aa).

Residues Gln151–Arg156, Thr181–Gly183, Asp214, and Asp243–Ser244 each bind S-adenosyl-L-methionine.

It belongs to the N(4)/N(6)-methyltransferase family. In terms of assembly, the type I restriction/modification system is composed of three polypeptides R, M and S; the restriction enzyme has stoichiometry R(2)M(2)S(1) while the methyltransferase is M(2)S(1).

It carries out the reaction a 2'-deoxyadenosine in DNA + S-adenosyl-L-methionine = an N(6)-methyl-2'-deoxyadenosine in DNA + S-adenosyl-L-homocysteine + H(+). Its function is as follows. The subtype gamma methyltransferase (M) subunit of a type I restriction enzyme. The M and S subunits together form a methyltransferase (MTase) that methylates two adenine residues of an undetermined sequence. In the presence of the R subunit the complex can also act as an endonuclease, binding to the same target sequence but cutting the DNA some distance from this site. Whether the DNA is cut or modified depends on the methylation state of the target sequence. When the target site is unmodified, the DNA is cut. When the target site is hemimethylated, the complex acts as a maintenance MTase modifying the DNA so that both strands become methylated. After locating a non-methylated recognition site, the enzyme complex serves as a molecular motor that translocates DNA in an ATP-dependent manner until a collision occurs that triggers cleavage. The protein is Type I restriction enzyme BthVORF4518P methylase subunit of Bacteroides thetaiotaomicron (strain ATCC 29148 / DSM 2079 / JCM 5827 / CCUG 10774 / NCTC 10582 / VPI-5482 / E50).